We begin with the raw amino-acid sequence, 809 residues long: Interleukin-4 receptor subunit alpha (809 aa).

Positions 1 to 25 (MGCLCPGLTLPVSCLILVWAAGSGS) are cleaved as a signal peptide. The Extracellular segment spans residues 26–231 (VKVLRLTACF…NYYEQPLEQR (206 aa)). An intrachain disulfide couples Cys34 to Cys44. N-linked (GlcNAc...) asparagine glycans are attached at residues Asn53 and Asn71. The cysteines at positions 74 and 86 are disulfide-linked. N-linked (GlcNAc...) asparagine glycosylation is found at Asn112, Asn128, and Asn161. A Fibronectin type-III domain is found at 125–222 (APQNLTVHAI…EWSPSTTWHN (98 aa)). Ser163 is subject to Phosphoserine. N-linked (GlcNAc...) asparagine glycosylation is found at Asn175 and Asn208. A WSXWS motif motif is present at residues 211–215 (WSEWS). Residues 232 to 255 (LPLGVSISCVVILAICLSCYFSII) form a helical membrane-spanning segment. Topologically, residues 256 to 809 (KIKKEWWDQI…STGPTCTSAS (554 aa)) are cytoplasmic. The Box 1 motif signature appears at 261-269 (WWDQIPNPA). Disordered stretches follow at residues 369–397 (ESEEEEVEEDRGSFCPSPESSGSGFQEGR) and 441–468 (SAGPQEAASQGEEQPLNPESNPLATLTQ). Over residues 447–468 (AASQGEEQPLNPESNPLATLTQ) the composition is skewed to polar residues. Tyr488 carries the phosphotyrosine modification. Residues 514-536 (LGQVDPSIPSAPQPSEPPTALQP) are disordered. Residues Tyr566, Tyr590, and Tyr618 each carry the phosphotyrosine modification. A disordered region spans residues 606-674 (QSGVEASSGE…EPTVKGEDPR (69 aa)). An ITIM motif motif is present at residues 695–700 (IVYSAL).

This sequence belongs to the type I cytokine receptor family. Type 4 subfamily. As to quaternary structure, the functional IL4 receptor is formed by initial binding of IL4 to IL4R. Subsequent recruitment to the complex of the common gamma chain, in immune cells, creates a type I receptor and, in non-immune cells, of IL13RA1 forms a type II receptor. IL4R can also interact with the IL13/IL13RA1 complex to form a similar type II receptor. Interacts with PIK3C3. Interacts with the SH2-containing phosphatases, PTPN6/SHIP1, PTPN11/SHIP2 and INPP5D/SHIP. Interacts with JAK1 through a Box 1-containing region; inhibited by SOCS5. Interacts with SOCS5; inhibits IL4 signaling. Interacts with JAK3. Interacts with CLM1. Interacts with IL13RA2. On IL4 binding, phosphorylated on tyrosine residues in the cytoplasmic domain.

The protein resides in the cell membrane. It is found in the secreted. Functionally, receptor for both interleukin 4 and interleukin 13. Couples to the JAK1/2/3-STAT6 pathway. The IL4 response is involved in promoting Th2 differentiation. The IL4/IL13 responses are involved in regulating IgE production and, chemokine and mucus production at sites of allergic inflammation. In certain cell types, can signal through activation of insulin receptor substrates, IRS1/IRS2. This chain is Interleukin-4 receptor subunit alpha (IL4R), found in Equus caballus (Horse).